The primary structure comprises 618 residues: Probable Xaa-Pro aminopeptidase P (618 aa).

Mn(2+) contacts are provided by Asp-415, Asp-426, Glu-524, and Glu-538.

Belongs to the peptidase M24B family. It depends on Mn(2+) as a cofactor.

It carries out the reaction Release of any N-terminal amino acid, including proline, that is linked to proline, even from a dipeptide or tripeptide.. Functionally, catalyzes the removal of a penultimate prolyl residue from the N-termini of peptides. This Pyricularia oryzae (strain 70-15 / ATCC MYA-4617 / FGSC 8958) (Rice blast fungus) protein is Probable Xaa-Pro aminopeptidase P (AMPP).